Consider the following 207-residue polypeptide: MKLPQAFYARDTRTVARALLGKVLVHLDGGVRRAARIVETEAYHGPDDRASHARAGPTPRAAIMFGPPGRAYVYLIYGTSHCMNVVTGPEGFPSAVLIRAAEPIEGCLHSTRGPGNLCRALAIRREHDNGRDLWGEELFIEDAPAPREAVVTGPRVNVGYAGPWAARPWRFALRGSAWVSRPAPAGARAARAPAPAPRPRRPRGSGP.

The segment covering 182–193 (PAPAGARAARAP) has biased composition (low complexity). Residues 182–207 (PAPAGARAARAPAPAPRPRRPRGSGP) are disordered. Over residues 198–207 (RPRRPRGSGP) the composition is skewed to basic residues.

The protein belongs to the DNA glycosylase MPG family.

This chain is Putative 3-methyladenine DNA glycosylase, found in Anaeromyxobacter dehalogenans (strain 2CP-C).